Reading from the N-terminus, the 332-residue chain is 2,3-diketo-L-gulonate reductase (332 aa).

The active-site Proton donor is His-44. NAD(+) contacts are provided by residues 168–174 (ITMVDMS), 224–225 (WK), and 304–306 (GHE).

It belongs to the LDH2/MDH2 oxidoreductase family. DlgD subfamily. Homodimer.

Its subcellular location is the cytoplasm. The catalysed reaction is 3-dehydro-L-gulonate + NAD(+) = 2,3-dioxo-L-gulonate + NADH + H(+). It carries out the reaction 3-dehydro-L-gulonate + NADP(+) = 2,3-dioxo-L-gulonate + NADPH + H(+). Its function is as follows. Catalyzes the reduction of 2,3-diketo-L-gulonate in the presence of NADH, to form 3-keto-L-gulonate. This Escherichia coli O81 (strain ED1a) protein is 2,3-diketo-L-gulonate reductase.